A 147-amino-acid polypeptide reads, in one-letter code: Ubiquitin-conjugating enzyme E2-16 kDa (147 aa).

Residues 1-147 (MAFKRINKEL…AREWTRKYAI (147 aa)) enclose the UBC core domain. Residue Cys-107 is the Glycyl thioester intermediate of the active site.

The protein belongs to the ubiquitin-conjugating enzyme family.

It carries out the reaction S-ubiquitinyl-[E1 ubiquitin-activating enzyme]-L-cysteine + [E2 ubiquitin-conjugating enzyme]-L-cysteine = [E1 ubiquitin-activating enzyme]-L-cysteine + S-ubiquitinyl-[E2 ubiquitin-conjugating enzyme]-L-cysteine.. It participates in protein modification; protein ubiquitination. In terms of biological role, catalyzes the covalent attachment of ubiquitin to other proteins. May also mediate selective proteolysis pathways. This Colletotrichum gloeosporioides (Anthracnose fungus) protein is Ubiquitin-conjugating enzyme E2-16 kDa (UBC1).